The chain runs to 896 residues: Protein bride of sevenless (896 aa).

A signal peptide spans 1–31; sequence MKVMDALQSGRRKPLPVALLCILVTVFCVLE. At 32 to 530 the chain is on the extracellular side; that stretch reads CHGADLTSPT…MFWRIKMDTW (499 aa). The tract at residues 38 to 84 is disordered; the sequence is TSPTKKSAPLRITKPQPTSQQAKPISITTRAPTTVASTTDDEVSSSV. Positions 52–64 are enriched in polar residues; sequence PQPTSQQAKPISI. Residues 65-84 show a composition bias toward low complexity; the sequence is TTRAPTTVASTTDDEVSSSV. N-linked (GlcNAc...) asparagine glycans are attached at residues Asn-183, Asn-307, Asn-474, and Asn-485. 7 helical membrane-spanning segments follow: residues 531 to 554, 570 to 588, 615 to 637, 655 to 676, 693 to 712, 728 to 748, and 759 to 781; these read VATGLTAAILGLIATLAILVFIVV, ILLLLSLILVFCSFVPYSI, VFIMTLVYCFVFSLLLCRAVMLA, AVICAFSVVAQVGMSVQLLVVM, WLWGLLAYDFALLCCVGALI, IVIGSVLIMVIWVAWIALSLF, and LGLQASGWAVLVGILIPRTFLIV. Residues 782-896 lie on the Cytoplasmic side of the membrane; sequence RGIERSDIAQ…SPDHNKITRF (115 aa). 2 disordered regions span residues 825–844 and 861–896; these read SQDEVNHQSPSEIPTLPLRG and ANINPQRPPPRPQQSPSRSSVSSLPPSPDHNKITRF. Low complexity predominate over residues 874–884; the sequence is QSPSRSSVSSL.

This sequence belongs to the G-protein coupled receptor 3 family. As to expression, expressed exclusively by R8 photoreceptor cells and is internalized in a sev-dependent manner by R7 cells.

The protein localises to the cell membrane. Acts as a ligand for sevenless tyrosine-kinase receptor during eye development. In Drosophila melanogaster (Fruit fly), this protein is Protein bride of sevenless (boss).